The primary structure comprises 257 residues: Ribonuclease HII (257 aa).

One can recognise an RNase H type-2 domain in the interval 72 to 257; it reads TYIAGIDEVG…FAPIKDMIQK (186 aa). Residues D78, E79, and D170 each coordinate a divalent metal cation.

This sequence belongs to the RNase HII family. The cofactor is Mn(2+). Mg(2+) serves as cofactor.

The protein resides in the cytoplasm. The enzyme catalyses Endonucleolytic cleavage to 5'-phosphomonoester.. In terms of biological role, endonuclease that specifically degrades the RNA of RNA-DNA hybrids. The sequence is that of Ribonuclease HII from Bacillus cereus (strain ZK / E33L).